The sequence spans 397 residues: Elongation factor Tu-1 (397 aa).

The 197-residue stretch at 10 to 206 (KPHVNIGTIG…AVDESIPEPE (197 aa)) folds into the tr-type G domain. Residues 19–26 (GHIDHGKT) are G1. 19–26 (GHIDHGKT) serves as a coordination point for GTP. Thr26 provides a ligand contact to Mg(2+). The tract at residues 62 to 66 (GITIS) is G2. The tract at residues 83–86 (DCPG) is G3. GTP-binding positions include 83–87 (DCPGH) and 138–141 (NKAD). The tract at residues 138–141 (NKAD) is G4. Residues 176-178 (SAL) are G5.

It belongs to the TRAFAC class translation factor GTPase superfamily. Classic translation factor GTPase family. EF-Tu/EF-1A subfamily. Monomer.

It localises to the cytoplasm. It carries out the reaction GTP + H2O = GDP + phosphate + H(+). Its function is as follows. GTP hydrolase that promotes the GTP-dependent binding of aminoacyl-tRNA to the A-site of ribosomes during protein biosynthesis. This Streptomyces ramocissimus protein is Elongation factor Tu-1.